The chain runs to 387 residues: Intraflagellar transport protein 57 (387 aa).

Belongs to the IFT57 family.

It localises to the cell projection. Its subcellular location is the cilium. The protein resides in the flagellum. The protein localises to the cytoplasm. It is found in the cytoskeleton. It localises to the flagellum axoneme. Its subcellular location is the flagellum basal body. Component of the intraflagellar transport complex B (IFT-B) involved in flagellar assembly. The polypeptide is Intraflagellar transport protein 57 (Giardia intestinalis (strain ATCC 50803 / WB clone C6) (Giardia lamblia)).